Here is a 149-residue protein sequence, read N- to C-terminus: Nucleoside diphosphate kinase (149 aa).

6 residues coordinate ATP: lysine 9, phenylalanine 57, arginine 85, threonine 91, arginine 102, and asparagine 112. Residue histidine 115 is the Pros-phosphohistidine intermediate of the active site.

Belongs to the NDK family. As to quaternary structure, homotetramer. Requires Mg(2+) as cofactor.

The protein resides in the cytoplasm. The catalysed reaction is a 2'-deoxyribonucleoside 5'-diphosphate + ATP = a 2'-deoxyribonucleoside 5'-triphosphate + ADP. The enzyme catalyses a ribonucleoside 5'-diphosphate + ATP = a ribonucleoside 5'-triphosphate + ADP. Its function is as follows. Major role in the synthesis of nucleoside triphosphates other than ATP. The ATP gamma phosphate is transferred to the NDP beta phosphate via a ping-pong mechanism, using a phosphorylated active-site intermediate. This Staphylococcus aureus (strain MSSA476) protein is Nucleoside diphosphate kinase.